The chain runs to 114 residues: Cystatin Pr15a (114 aa).

An N-terminal signal peptide occupies residues 1-22 (MFTVKLLAFMVVAVSLQHLAEA). Positions 29 to 83 (GCPVEVDPNREDIKKSLAHVMAAKNSPDELVRIIKASTQVVNGIKYKVVFEVKNP) constitute a Cystatin domain.

It belongs to the cystatin family. As to expression, expressed by the venom gland (anterior main gland) (at protein level).

The protein localises to the secreted. In Platymeris rhadamanthus (Red spot assassin bug), this protein is Cystatin Pr15a.